The primary structure comprises 154 residues: Protein phosphatase 1 regulatory subunit 27 (154 aa).

2 ANK repeats span residues 63–92 (SGLA…DIHQ) and 96–125 (TGWT…DRDA).

As to quaternary structure, interacts with DYSF and PPP1CA.

Functionally, inhibits phosphatase activity of protein phosphatase 1 (PP1) complexes. The polypeptide is Protein phosphatase 1 regulatory subunit 27 (Ppp1r27) (Mus musculus (Mouse)).